The sequence spans 506 residues: Phase 2 flagellin (506 aa).

It belongs to the bacterial flagellin family.

The protein resides in the secreted. It is found in the bacterial flagellum. Functionally, flagellin is the subunit protein which polymerizes to form the filaments of bacterial flagella. The protein is Phase 2 flagellin (fljB) of Salmonella typhimurium (strain LT2 / SGSC1412 / ATCC 700720).